We begin with the raw amino-acid sequence, 323 residues long: Cyclin-dependent kinase 1 (323 aa).

The region spanning 4–306 (YQKIEKIGEG…AKQACMHPYF (303 aa)) is the Protein kinase domain. Residues 10–18 (IGEGTYGVV) and K34 contribute to the ATP site. A Phosphothreonine modification is found at T14. Y15 carries the post-translational modification Phosphotyrosine. The Proton acceptor role is filled by D147. Position 180 is a phosphothreonine; by CAK (T180).

It belongs to the protein kinase superfamily. CMGC Ser/Thr protein kinase family. CDC2/CDKX subfamily. Forms a stable but non-covalent complex with a regulatory subunit (SUC1) and with a cyclin.

It carries out the reaction L-seryl-[protein] + ATP = O-phospho-L-seryl-[protein] + ADP + H(+). The catalysed reaction is L-threonyl-[protein] + ATP = O-phospho-L-threonyl-[protein] + ADP + H(+). With respect to regulation, phosphorylation at Thr-14 or Tyr-15 inactivates the enzyme, while phosphorylation at Thr-180 activates it. Its function is as follows. Cyclin-dependent kinase that acts as a master regulator of the mitotic and meiotic cell cycles. The sequence is that of Cyclin-dependent kinase 1 from Emericella nidulans (strain FGSC A4 / ATCC 38163 / CBS 112.46 / NRRL 194 / M139) (Aspergillus nidulans).